Reading from the N-terminus, the 203-residue chain is Endo-type membrane-bound lytic murein transglycosylase A (203 aa).

Residues 1-15 (MKLRWFAFLIVLLAG) form the signal peptide. C16 carries N-palmitoyl cysteine lipidation. C16 carries S-diacylglycerol cysteine lipidation.

The protein belongs to the transglycosylase Slt family.

Its subcellular location is the cell outer membrane. It carries out the reaction Endolytic cleavage of the (1-&gt;4)-beta-glycosidic linkage between N-acetylmuramic acid (MurNAc) and N-acetylglucosamine (GlcNAc) residues in peptidoglycan with concomitant formation of a 1,6-anhydrobond in the MurNAc residue.. Its function is as follows. Murein-degrading enzyme. May play a role in recycling of muropeptides during cell elongation and/or cell division. Preferentially cleaves at a distance of more than two disaccharide units from the ends of the glycan chain. The protein is Endo-type membrane-bound lytic murein transglycosylase A of Escherichia coli O127:H6 (strain E2348/69 / EPEC).